The chain runs to 635 residues: Cationic amino acid transporter 4 (635 aa).

The next 3 helical transmembrane spans lie at 42 to 62 (LTLL…TGAV), 66 to 86 (VAGP…LLAA), and 113 to 133 (LWAF…GAAV). N-linked (GlcNAc...) asparagine glycans are attached at residues N151 and N195. A helical transmembrane segment spans residues 197–217 (TFSAISLLVILFIVILGFILA). The N-linked (GlcNAc...) asparagine glycan is linked to N221. 5 helical membrane passes run 229–249 (FAPF…YAFV), 270–290 (LAIA…STVL), 318–338 (GFIV…SLLF), 365–385 (QVPV…ALLL), and 391–411 (VQFL…SIIV). Phosphoserine is present on residues S422 and S427. The chain crosses the membrane as a helical span at residues 478–498 (VTWALGVMLASAITIGCVLVF). Residue N500 is glycosylated (N-linked (GlcNAc...) asparagine). 3 helical membrane passes run 508 to 528 (WGYI…LLVL), 539 to 559 (LFQI…NICL), and 567 to 587 (TWVR…GYGI). The N-linked (GlcNAc...) asparagine glycan is linked to N601.

This sequence belongs to the amino acid-polyamine-organocation (APC) superfamily. Cationic amino acid transporter (CAT) (TC 2.A.3.3) family.

It is found in the membrane. Its function is as follows. Involved in the transport of the cationic amino acids (arginine, lysine and ornithine). The protein is Cationic amino acid transporter 4 (SLC7A4) of Homo sapiens (Human).